A 383-amino-acid chain; its full sequence is MERRARSSSRESRGRGGRTPHKENKRAKAERSGGGRGRQEAGPEPSGSGRAGTPGEPRAPAATVVDVDEVRGSGEEGTEVVALLESERPEEGTKSSGLGACEWLLVLISLLFIIMTFPFSIWFCVKVVQEYERVIIFRLGHLLPGRAKGPGLFFFLPCLDTYHKVDLRLQTLEIPFHEIVTKDMFIMEIDAICYYRMENASLLLSSLAHVSKAVQFLVQTTMKRLLAHRSLTEILLERKSIAQDAKVALDSVTCIWGIKVERIEIKDVRLPAGLQHSLAVEAEAQRQAKVRMIAAEAEKAASESLRMAAEILSGTPAAVQLRYLHTLQSLSTEKPSTVVLPLPFDLLNCLSSPSNRTQGSLPFPSPSKPVEPLNPKKKDSPML.

A compositionally biased stretch (basic and acidic residues) spans 1–41 (MERRARSSSRESRGRGGRTPHKENKRAKAERSGGGRGRQEA). The interval 1–76 (MERRARSSSR…VDEVRGSGEE (76 aa)) is disordered. Topologically, residues 1–102 (MERRARSSSR…TKSSGLGACE (102 aa)) are cytoplasmic. Residue cysteine 101 is the site of S-palmitoyl cysteine attachment. The stretch at 103-123 (WLLVLISLLFIIMTFPFSIWF) is an intramembrane region. The Cytoplasmic portion of the chain corresponds to 124-383 (CVKVVQEYER…NPKKKDSPML (260 aa)). Residue glutamine 287 is glycosylated (N-linked (GlcNAc...) asparagine). The segment at 355–383 (NRTQGSLPFPSPSKPVEPLNPKKKDSPML) is disordered. Over residues 374–383 (NPKKKDSPML) the composition is skewed to basic and acidic residues.

It belongs to the band 7/mec-2 family. In terms of assembly, interacts with nephrin/NPHS1 and KIRREL1. Interacts directly with CD2AP. Interacts with DDN. Post-translationally, glycosylated. As to expression, almost exclusively expressed in the podocytes of fetal and mature kidney glomeruli.

The protein localises to the cell membrane. It is found in the endoplasmic reticulum. Functionally, plays a role in the regulation of glomerular permeability, acting probably as a linker between the plasma membrane and the cytoskeleton. This chain is Podocin (NPHS2), found in Homo sapiens (Human).